Here is a 694-residue protein sequence, read N- to C-terminus: Polyribonucleotide nucleotidyltransferase (694 aa).

Asp-485 and Asp-491 together coordinate Mg(2+). One can recognise a KH domain in the interval 552 to 611 (PRIETMQIKPNKIATVIGPGGKQIRQIIEEAGVQIDINDSGLVSISASSPQAIEKAKSII). Residues 621–689 (GKIYEGRVTS…EKGQYKLSHK (69 aa)) enclose the S1 motif domain.

Belongs to the polyribonucleotide nucleotidyltransferase family. It depends on Mg(2+) as a cofactor.

The protein resides in the cytoplasm. It carries out the reaction RNA(n+1) + phosphate = RNA(n) + a ribonucleoside 5'-diphosphate. Involved in mRNA degradation. Catalyzes the phosphorolysis of single-stranded polyribonucleotides processively in the 3'- to 5'-direction. The polypeptide is Polyribonucleotide nucleotidyltransferase (Chlamydia abortus (strain DSM 27085 / S26/3) (Chlamydophila abortus)).